A 179-amino-acid polypeptide reads, in one-letter code: Putative manganese efflux pump MntP (179 aa).

The next 6 membrane-spanning stretches (helical) occupy residues 4 to 24 (VLIL…GLGI), 39 to 59 (LFFG…GIGL), 69 to 89 (IVAF…AFNE), 102 to 122 (ILLT…YSLH), 128 to 148 (IYLS…IGVY), and 159 to 179 (SKAE…ILLF).

The protein belongs to the MntP (TC 9.B.29) family.

The protein resides in the cell inner membrane. In terms of biological role, probably functions as a manganese efflux pump. This is Putative manganese efflux pump MntP from Aliarcobacter butzleri (strain RM4018) (Arcobacter butzleri).